The sequence spans 430 residues: C-terminal-binding protein 1 (430 aa).

The interaction with GLIS2 1 stretch occupies residues 1-59; that stretch reads MSGVRPPIMNGPMHPRPLVALLDGRDCTVEMPILKDVATVAFCDAQSTQEIHEKVLNEA. Residues serine 89, 169 to 174, aspartate 193, 226 to 232, 253 to 255, and aspartate 279 contribute to the NAD(+) site; these read IGLGRV, CGLNEHN, and TAR. The active site involves arginine 255. Residues 277 to 349 are interaction with GLIS2 2; the sequence is ALDVHESEPF…VNKDHLTAAT (73 aa). The active site involves glutamate 284. Position 289 is a phosphoserine (serine 289). The Proton donor role is filled by histidine 304. The interval 398–430 is disordered; it reads SHGLPPVAHPPHAPSPGQTVKPEADRDHTTDQL. Serine 412 bears the Phosphoserine mark. Lysine 418 is covalently cross-linked (Glycyl lysine isopeptide (Lys-Gly) (interchain with G-Cter in SUMO)). Over residues 419 to 430 the composition is skewed to basic and acidic residues; that stretch reads PEADRDHTTDQL.

It belongs to the D-isomer specific 2-hydroxyacid dehydrogenase family. In terms of assembly, homo- or heterodimer. Heterodimer with CTBP2. Interacts with ELK3 (via its PXDLS motif). Interacts with RBBP8 (via its PXDLS motif); the interaction is disrupted by binding to adenovirus E1A. Interacts with PNN, MECOM and ZFHX1B. Interacts with ZNF366 (via PXDLS motif). Interaction with SATB1 (non-acetylated form); the interaction stabilizes its attachment to DNA and promotes transcription repression. Interacts with PRDM16; the interaction represses white adipose tissue (WAT)-specific genes expression. Interacts with GLIS2, HIPK2, FOXP1, FOXP2, HDAC4, HDAC5, HDAC9, NRIP1 and WIZ. Interacts with ZNF217. Interacts with BCL6; the interaction is required for BCL6 transcriptional autoinhibition and inhibition of some BCL6 target genes. Interacts with IKZF4. Interacts with MCRIP1 (unphosphorylated form, via the PXDLS motif); competitively inhibiting CTBP-ZEB1 interaction. Interacts with Bassoon/BSN; this interaction targets and anchors CTBP1 to presynapses. Interacts with SIMC1. The cofactor is NAD(+). The level of phosphorylation appears to be regulated during the cell cycle. Phosphorylation by HIPK2 on Ser-412 induces proteasomal degradation. In terms of processing, ADP-ribosylated; when cells are exposed to brefeldin A. Post-translationally, sumoylation on Lys-418 is promoted by the E3 SUMO-protein ligase CBX4.

It is found in the cytoplasm. The protein resides in the nucleus. It localises to the synapse. The protein localises to the synaptosome. Its function is as follows. Corepressor targeting diverse transcription regulators such as GLIS2 or BCL6. Has dehydrogenase activity. Involved in controlling the equilibrium between tubular and stacked structures in the Golgi complex. Functions in brown adipose tissue (BAT) differentiation. The sequence is that of C-terminal-binding protein 1 (Ctbp1) from Rattus norvegicus (Rat).